A 202-amino-acid polypeptide reads, in one-letter code: N-(5'-phosphoribosyl)anthranilate isomerase (202 aa).

It belongs to the TrpF family.

It catalyses the reaction N-(5-phospho-beta-D-ribosyl)anthranilate = 1-(2-carboxyphenylamino)-1-deoxy-D-ribulose 5-phosphate. It participates in amino-acid biosynthesis; L-tryptophan biosynthesis; L-tryptophan from chorismate: step 3/5. This chain is N-(5'-phosphoribosyl)anthranilate isomerase, found in Listeria monocytogenes serotype 4b (strain CLIP80459).